The chain runs to 266 residues: GTP-binding protein Rhes (266 aa).

26–33 serves as a coordination point for GTP; that stretch reads GASRVGKS. The Effector region signature appears at 48 to 56; the sequence is YTPTIEDFH. GTP contacts are provided by residues 73–77 and 140–143; these read DTSGN and NKND. Residues 189–235 form an interaction with GNB1, GNB2 and GNB3 region; it reads MAKLPHEMSPALHRKISVQYGDAFHPRPFCMRRVKEMDAYGMVSPFA. Cysteine methyl ester is present on Cys-263. Cys-263 carries the S-farnesyl cysteine lipid modification. Positions 264 to 266 are cleaved as a propeptide — removed in mature form; sequence TIQ.

This sequence belongs to the small GTPase superfamily. RasD family. As to quaternary structure, monomer (Potential). Interacts with PIK3CA and UBE2I. Interacts with GNB1, GNB2 and GNB3. Interacts with HTT; interacts with mutant HTT (mHTT) with a much higher affinity than wild type HTT. In terms of processing, farnesylated. Farnesylation is required for membrane targeting. As to expression, pancreatic endocrine cells (islets of Langerhans).

It is found in the cell membrane. Its function is as follows. GTPase signaling protein that binds to and hydrolyzes GTP. Regulates signaling pathways involving G-proteins-coupled receptor and heterotrimeric proteins such as GNB1, GNB2 and GNB3. May be involved in selected striatal competencies, mainly locomotor activity and motor coordination. The sequence is that of GTP-binding protein Rhes (RASD2) from Homo sapiens (Human).